Reading from the N-terminus, the 442-residue chain is Chromosomal replication initiator protein DnaA (442 aa).

A domain I, interacts with DnaA modulators region spans residues Met1–Gly75. A domain II region spans residues Gly75–Gly104. A domain III, AAA+ region region spans residues Asn105–Ala322. Positions 150, 152, 153, and 154 each coordinate ATP. Residues Asn323–Glu442 are domain IV, binds dsDNA.

Belongs to the DnaA family. In terms of assembly, oligomerizes as a right-handed, spiral filament on DNA at oriC.

Its subcellular location is the cytoplasm. In terms of biological role, plays an essential role in the initiation and regulation of chromosomal replication. ATP-DnaA binds to the origin of replication (oriC) to initiate formation of the DNA replication initiation complex once per cell cycle. Binds the DnaA box (a 9 base pair repeat at the origin) and separates the double-stranded (ds)DNA. Forms a right-handed helical filament on oriC DNA; dsDNA binds to the exterior of the filament while single-stranded (ss)DNA is stabiized in the filament's interior. The ATP-DnaA-oriC complex binds and stabilizes one strand of the AT-rich DNA unwinding element (DUE), permitting loading of DNA polymerase. After initiation quickly degrades to an ADP-DnaA complex that is not apt for DNA replication. Binds acidic phospholipids. The polypeptide is Chromosomal replication initiator protein DnaA (Xanthomonas campestris pv. campestris (strain 8004)).